Reading from the N-terminus, the 464-residue chain is MYYIGHPSYYRKHIEHVCFQHSGILKKRNYQKNQKKYIMKLNESAMKNAEKKSNSYLAIRMTRSGYNYFKGICVCTFLLSTILYLGIAVIMSHLCVFDDTAMLYLRQNRSRLAESNIFRTLFISWIRWDAIYFVDMAVNGSLFEQEWAFSSLWPKIISFLAFRSKDVVLLGIVSCFASIFFHAIACYALYLLTKSIFSNQKMTAYTVIFYCFSPSGIYMSVGYTESLFAAFSFLGLLLFIKKQQYPAAFLWSLATLIRSNGIFWCIFFGMPAIGTLKISLERLQLTFMQVSQLVGYGTKCLIILVPFFYNQYLGFKLFCPGVAWCNKSLPLIYPAVQEKYWNVGFLRYWTLNNIPNFLFALLSIIPILFALFYSISGSTLHSFRSIKSHLVLSALYLYIGCFHMHTQVLNRMSSALPLLYWSMAHATLYAKSRNLKAFGHCILFVWIVYTVIQAGLYGSFLPPA.

The Cytoplasmic portion of the chain corresponds to 1-70; the sequence is MYYIGHPSYY…MTRSGYNYFK (70 aa). The chain crosses the membrane as a helical span at residues 71–91; that stretch reads GICVCTFLLSTILYLGIAVIM. The Lumenal portion of the chain corresponds to 92-166; that stretch reads SHLCVFDDTA…ISFLAFRSKD (75 aa). N-linked (GlcNAc...) asparagine glycosylation is found at asparagine 108 and asparagine 139. Residues 167-187 form a helical membrane-spanning segment; it reads VVLLGIVSCFASIFFHAIACY. Over 188–219 the chain is Cytoplasmic; that stretch reads ALYLLTKSIFSNQKMTAYTVIFYCFSPSGIYM. The helical transmembrane segment at 220–240 threads the bilayer; it reads SVGYTESLFAAFSFLGLLLFI. The Lumenal segment spans residues 241–260; sequence KKQQYPAAFLWSLATLIRSN. Residues 261–281 form a helical membrane-spanning segment; it reads GIFWCIFFGMPAIGTLKISLE. The Cytoplasmic portion of the chain corresponds to 282 to 289; it reads RLQLTFMQ. A helical transmembrane segment spans residues 290–309; it reads VSQLVGYGTKCLIILVPFFY. The Lumenal segment spans residues 310-356; the sequence is NQYLGFKLFCPGVAWCNKSLPLIYPAVQEKYWNVGFLRYWTLNNIPN. Asparagine 326 carries an N-linked (GlcNAc...) asparagine glycan. Residues 357–377 traverse the membrane as a helical segment; that stretch reads FLFALLSIIPILFALFYSISG. Over 378 to 388 the chain is Cytoplasmic; it reads STLHSFRSIKS. A helical membrane pass occupies residues 389–409; the sequence is HLVLSALYLYIGCFHMHTQVL. Topologically, residues 410-440 are lumenal; sequence NRMSSALPLLYWSMAHATLYAKSRNLKAFGH. Residues 441-461 traverse the membrane as a helical segment; that stretch reads CILFVWIVYTVIQAGLYGSFL. The Cytoplasmic portion of the chain corresponds to 462 to 464; the sequence is PPA.

The protein belongs to the PIGV family. As to quaternary structure, part of the GPI mannosyltransferase 2 complex composed of gpi18 and C167.09.

The protein resides in the endoplasmic reticulum membrane. The protein operates within glycolipid biosynthesis; glycosylphosphatidylinositol-anchor biosynthesis. Its function is as follows. Mannosyltransferase involved in glycosylphosphatidylinositol-anchor biosynthesis. Responsible for the transfer of the second mannose to the glycosylphosphatidylinositol during GPI precursor assembly. The sequence is that of GPI mannosyltransferase 2 (gpi18) from Schizosaccharomyces pombe (strain 972 / ATCC 24843) (Fission yeast).